The following is a 148-amino-acid chain: Transcriptional regulator MraZ (148 aa).

SpoVT-AbrB domains are found at residues 5–51 (STQL…PQPV) and 80–123 (ACDV…DMAK).

Belongs to the MraZ family. Forms oligomers.

The protein resides in the cytoplasm. It localises to the nucleoid. This Nitrosomonas eutropha (strain DSM 101675 / C91 / Nm57) protein is Transcriptional regulator MraZ.